The primary structure comprises 58 residues: Mesomartoxin (58 aa).

A signal peptide spans 1–29 (MMSRLSVFILIALVLSVIIDVLNNSKVEG). 3 disulfide bridges follow: C31-C49, C35-C54, and C39-C56.

The protein belongs to the short scorpion toxin superfamily. Potassium channel inhibitor family. Alpha-KTx 26 subfamily. Expressed by the venom gland.

It localises to the secreted. Its function is as follows. Recombinant toxin that reversibly blocks the voltage-gated potassium channels Shaker (IC(50)=0.054 nM), rKv1.2/KCNA2 (IC(50)=15.6 nM), and rKv1.3/KCNA3 (IC(50)=12.5 uM). In Olivierus martensii (Manchurian scorpion), this protein is Mesomartoxin.